The sequence spans 821 residues: DNA ligase (821 aa).

Residues aspartate 33–aspartate 37, serine 82–leucine 83, and glutamate 113 each bind NAD(+). Lysine 115 functions as the N6-AMP-lysine intermediate in the catalytic mechanism. NAD(+) is bound by residues arginine 136, glutamate 173, lysine 290, and lysine 314. Cysteine 408, cysteine 411, cysteine 426, and cysteine 432 together coordinate Zn(2+). Positions isoleucine 741–glutamate 821 constitute a BRCT domain.

This sequence belongs to the NAD-dependent DNA ligase family. LigA subfamily. Mg(2+) serves as cofactor. Requires Mn(2+) as cofactor.

It carries out the reaction NAD(+) + (deoxyribonucleotide)n-3'-hydroxyl + 5'-phospho-(deoxyribonucleotide)m = (deoxyribonucleotide)n+m + AMP + beta-nicotinamide D-nucleotide.. In terms of biological role, DNA ligase that catalyzes the formation of phosphodiester linkages between 5'-phosphoryl and 3'-hydroxyl groups in double-stranded DNA using NAD as a coenzyme and as the energy source for the reaction. It is essential for DNA replication and repair of damaged DNA. This is DNA ligase from Stenotrophomonas maltophilia (strain R551-3).